Here is a 570-residue protein sequence, read N- to C-terminus: Interleukin-1 receptor accessory protein (570 aa).

Residues 1-20 form the signal peptide; it reads MTLLWCVVSLYFYGILQSDA. Ig-like C2-type domains are found at residues 21–128, 141–230, and 242–348; these read SERC…VAFP, PMKL…RTLT, and PPVI…AKVK. At 21 to 367 the chain is on the extracellular side; that stretch reads SERCDDWGLD…VELACGFGAT (347 aa). 5 disulfide bridges follow: C24-C122, C47-C114, C137-C181, C160-C212, and C266-C332. N57 is a glycosylation site (N-linked (GlcNAc...) asparagine). The segment at 69-85 is essential for interaction with PTPRD; that stretch reads IWYWTRQDRDLEEPINF. 3 N-linked (GlcNAc...) asparagine glycosylation sites follow: N107, N111, and N118. 3 N-linked (GlcNAc...) asparagine glycosylation sites follow: N196, N209, and N299. Residues 368 to 388 form a helical membrane-spanning segment; sequence VLLVVILIVVYHVYWLEMVLF. The Cytoplasmic segment spans residues 389 to 570; the sequence is YRAHFGTDET…GLSYSSLKNV (182 aa). In terms of domain architecture, TIR spans 403 to 546; it reads KEYDIYVSYA…RFWKQLQVAM (144 aa). Residue E482 is part of the active site. The disordered stretch occupies residues 549–570; sequence KKSPRRSSSDEQGLSYSSLKNV. S557 is modified (phosphoserine). Over residues 558-570 the composition is skewed to polar residues; sequence DEQGLSYSSLKNV.

It belongs to the interleukin-1 receptor family. In terms of assembly, the interleukin-36 receptor complex is a heterodimer of IL1RL2 and IL1RAP; the association is inhibited by IL36RN. The interleukin-1 receptor complex is a heterodimer of IL1R1 and IL1RAP. Associates with IL1R2 to form a non-signaling interleukin-1 receptor complex. Isoform 4 interacts with IL1R1 in an interleukin-1-dependent manner. Interacts with IL-33-bound IL1RL1 to form the minimal interleukin-33 signaling complex with a 1:1:1 stoichiometry. Interacts with KIT (independently of stimulation with KITLG/SCF). A mast cell-specific KITLG/SCF-induced interleukin-33 signaling complex contains IL1RL1, IL1RAP, KIT and MYD88. Interacts (via the first immunoglobilin domain) with PTPRD (via the third immunoglobilin domain); induces pre- and postsynaptic differentiation of neurons. As to expression, detected in liver, skin, placenta, thymus and lung. Isoform 4 is predominantly expressed in brain. Overexpressed on candidate chronic myeloid leukemia (CML) stem cells, hematopoietic stem cells and mononuclear cells of patients with acute myeloid leukemia (AML). Overexpressed in patients with chronic obstructive pulmonary disease (COPD). Expressed in T-helper 1 (Th1) and T-helper 2 (Th2) cell subsets.

It is found in the cell membrane. The protein localises to the secreted. The catalysed reaction is NAD(+) + H2O = ADP-D-ribose + nicotinamide + H(+). Its function is as follows. Coreceptor for IL1RL2 in the IL-36 signaling system. Coreceptor with IL1R1 in the IL-1 signaling system. Associates with IL1R1 bound to IL1B to form the high affinity interleukin-1 receptor complex which mediates interleukin-1-dependent activation of NF-kappa-B and other pathways. Signaling involves the recruitment of adapter molecules such as TOLLIP, MYD88, and IRAK1 or IRAK2 via the respective TIR domains of the receptor/coreceptor subunits. Recruits TOLLIP to the signaling complex. Does not bind to interleukin-1 alone; binding of IL1RN to IL1R1, prevents its association with IL1R1 to form a signaling complex. The cellular response is modulated through a non-signaling association with the membrane IL1R2 decoy receptor. Coreceptor for IL1RL1 in the IL-33 signaling system. Can bidirectionally induce pre- and postsynaptic differentiation of neurons by trans-synaptically binding to PTPRD. May play a role in IL1B-mediated costimulation of IFNG production from T-helper 1 (Th1) cells. Associates with secreted ligand-bound IL1R2 and increases the affinity of secreted IL1R2 for IL1B; this complex formation may be the dominant mechanism for neutralization of IL1B by secreted/soluble receptors. Enhances the ability of secreted IL1R1 to inhibit IL-33 signaling. Functionally, unable to mediate canonical IL-1 signaling. Required for Src phosphorylation by IL1B. May be involved in IL1B-potentiated NMDA-induced calcium influx in neurons. This is Interleukin-1 receptor accessory protein (IL1RAP) from Homo sapiens (Human).